Here is a 30-residue protein sequence, read N- to C-terminus: Trypsin inhibitor 4 (30 aa).

3 disulfides stabilise this stretch: C3-C20, C10-C22, and C16-C29.

This sequence belongs to the protease inhibitor I7 (squash-type serine protease inhibitor) family.

It is found in the secreted. Inhibits trypsin. This Cucumis sativus (Cucumber) protein is Trypsin inhibitor 4.